A 2073-amino-acid polypeptide reads, in one-letter code: MAEVRKFTKRLSKPGTAAELRQSVSEAVRGSVVLEKAKVVEPLDYENVIAQRKTQIYSDPLRDLLMFPMEDISISVIGRQRRTVQSTVPEDAEKRAQSLFVKECIKTYSTDWHVVNYKYEDFSGDFRMLPCKSLRPEKIPNHVFEIDEDCEKDEDSSSLCSQKGGVIKQGWLHKANVNSTITVTMKVFKRRYFYLTQLPDGSYILNSYKDEKNSKESKGCIYLDACIDVVQCPKMRRHAFELKMLDKYSHYLAAETEQEMEEWLITLKKIIQINTDSLVQEKKETVETAQDDETSSQGKAENIMASLERSMHPELMKYGRETEQLNKLSRGDGRQNLFSFDSEVQRLDFSGIEPDIKPFEEKCNKRFLVNCHDLTFNILGQIGDNAKGPPTNVEPFFINLALFDVKNNCKISADFHVDLNPPSVREMLWGSSTQLASDGSPKGSSPESYIHGIAESQLRYIQQGIFSVTNPHPEIFLVARIEKVLQGNITHCAEPYIKNSDPVKTAQKVHRTAKQVCSRLGQYRMPFAWAARPIFKDTQGSLDLDGRFSPLYKQDSSKLSSEDILKLLSEYKKPEKTKLQIIPGQLNITVECVPVDLSNCITSSYVPLKPFEKNCQNITVEVEEFVPEMTKYCYPFTIYKNHLYVYPLQLKYDSQKTFAKARNIAVCVEFRDSDESDASALKCIYGKPAGSVFTTNAYAVVSHHNQNPEFYDEIKIELPIHLHQKHHLLFTFYHVSCEINTKGTTKKQDTVETPVGFAWVPLLKDGRIITFEQQLPVSANLPPGYLNLNDAESRRQCNVDIKWVDGAKPLLKIKSHLESTIYTQDLHVHKFFHHCQLIQSGSKEVPGELIKYLKCLHAMEIQVMIQFLPVILMQLFRVLTNMTHEDDVPINCTMVLLHIVSKCHEEGLDSYLRSFIKYSFRPEKPSAPQAQLIHETLATTMIAILKQSADFLSINKLLKYSWFFFEIIAKSMATYLLEENKIKLPRGQRFPETYHHVLHSLLLAIIPHVTIRYAEIPDESRNVNYSLASFLKRCLTLMDRGFIFNLINDYISGFSPKDPKVLAEYKFEFLQTICNHEHYIPLNLPMAFAKPKLQRVQDSNLEYSLSDEYCKHHFLVGLLLRETSIALQDNYEIRYTAISVIKNLLIKHAFDTRYQHKNQQAKIAQLYLPFVGLLLENIQRLAGRDTLYSCAAMPNSASRDEFPCGFTSPANRGSLSTDKDTAYGSFQNGHGIKREDSRGSLIPEGATGFPDQGNTGENTRQSSTRSSVSQYNRLDQYEIRSLLMCYLYIVKMISEDTLLTYWNKVSPQELINILILLEVCLFHFRYMGKRNIARVHDAWLSKHFGIDRKSQTMPALRNRSGVMQARLQHLSSLESSFTLNHSSTTTEADIFHQALLEGNTATEVSLTVLDTISFFTQCFKTQLLNNDGHNPLMKKVFDIHLAFLKNGQSEVSLKHVFASLRAFISKFPSAFFKGRVNMCAAFCYEVLKCCTSKISSTRNEASALLYLLMRNNFEYTKRKTFLRTHLQIIIAVSQLIADVALSGGSRFQESLFIINNFANSDRPMKATAFPAEVKDLTKRIRTVLMATAQMKEHEKDPEMLIDLQYSLAKSYASTPELRKTWLDSMAKIHVKNGDFSEAAMCYVHVAALVAEFLHRKKLFPNGCSAFKKITPNIDEEGAMKEDAGMMDVHYSEEVLLELLEQCVDGLWKAERYEIISEISKLIVPIYEKRREFEKLTQVYRTLHGAYTKILEVMHTKKRLLGTFFRVAFYGQSFFEEEDGKEYIYKEPKLTGLSEISLRLVKLYGEKFGTENVKIIQDSDKVNAKELDPKYAHIQVTYVKPYFDDKELTERKTEFERNHNISRFVFEAPYTLSGKKQGCIEEQCKRRTILTTSNSFPYVKKRIPINCEQQINLKPIDVATDEIKDKTAELQKLCSSTDVDMIQLQLKLQGCVSVQVNAGPLAYARAFLNDSQASKYPPKKVSELKDMFRKFIQACSIALELNERLIKEDQVEYHEGLKSNFRDMVKELSDIIHEQILQEDTMHSPWMSNTLHVFCAISGTSSDRGYGSPRYAEV.

At serine 12 the chain carries Phosphoserine. Threonine 16 carries the phosphothreonine modification. Phosphoserine is present on residues serine 23 and serine 161. The PH domain occupies 165 to 272 (GVIKQGWLHK…WLITLKKIIQ (108 aa)). Phosphotyrosine is present on tyrosine 248. Residues serine 306, serine 440, and serine 445 each carry the phosphoserine modification. A C2 DOCK-type domain is found at 640–818 (KNHLYVYPLQ…PLLKIKSHLE (179 aa)). The tract at residues 1226–1267 (FQNGHGIKREDSRGSLIPEGATGFPDQGNTGENTRQSSTRSS) is disordered. Serine 1237 and serine 1240 each carry phosphoserine. The region spanning 1609 to 2036 (KSYASTPELR…LSDIIHEQIL (428 aa)) is the DOCKER domain.

This sequence belongs to the DOCK family. In terms of assembly, interacts with CDC42.

Guanine nucleotide-exchange factor (GEF) that activates CDC42 by exchanging bound GDP for free GTP. Required for marginal zone (MZ) B-cell development, is associated with early bone marrow B-cell development, MZ B-cell formation, MZ B-cell number and marginal metallophilic macrophages morphology. Facilitates filopodia formation through the activation of CDC42. The chain is Dedicator of cytokinesis protein 11 from Homo sapiens (Human).